Reading from the N-terminus, the 341-residue chain is N-acetyl-gamma-glutamyl-phosphate reductase (341 aa).

Residue C148 is part of the active site.

Belongs to the NAGSA dehydrogenase family. Type 1 subfamily.

It localises to the cytoplasm. The enzyme catalyses N-acetyl-L-glutamate 5-semialdehyde + phosphate + NADP(+) = N-acetyl-L-glutamyl 5-phosphate + NADPH + H(+). The protein operates within amino-acid biosynthesis; L-arginine biosynthesis; N(2)-acetyl-L-ornithine from L-glutamate: step 3/4. In terms of biological role, catalyzes the NADPH-dependent reduction of N-acetyl-5-glutamyl phosphate to yield N-acetyl-L-glutamate 5-semialdehyde. The chain is N-acetyl-gamma-glutamyl-phosphate reductase from Pseudothermotoga lettingae (strain ATCC BAA-301 / DSM 14385 / NBRC 107922 / TMO) (Thermotoga lettingae).